The primary structure comprises 426 residues: Synaptotagmin-13 (426 aa).

At 1–6 (MVLSVP) the chain is on the vesicular side. The helical transmembrane segment at 7 to 29 (VIALGATLGTATSILALCGVTCL) threads the bilayer. Residues 30–426 (CRHMHPKKGL…QIAMWHQLHL (397 aa)) are Cytoplasmic-facing. 2 consecutive C2 domains span residues 158–275 (QAPK…AQWG) and 287–422 (GAGE…AMWH).

It belongs to the synaptotagmin family. Interacts with NRXN1. In terms of tissue distribution, expressed in brain, pancreas and kidney.

It localises to the membrane. Its function is as follows. May be involved in transport vesicle docking to the plasma membrane. This Homo sapiens (Human) protein is Synaptotagmin-13 (SYT13).